Reading from the N-terminus, the 852-residue chain is Pentatricopeptide repeat-containing protein At5g02830, chloroplastic (852 aa).

A chloroplast-targeting transit peptide spans 1 to 25 (MRDFVIVFGSSSAITNPHHHHRRCY). The disordered stretch occupies residues 17–60 (PHHHHRRCYATAPESNRKTKSNSSFTKLLPSLPQQHSPSPASVS). Low complexity predominate over residues 44–58 (LLPSLPQQHSPSPAS). 8 PPR repeats span residues 334 to 364 (DMTS…AKRM), 373 to 407 (DAFT…GVTP), 408 to 442 (NTHT…GCEP), 443 to 477 (NSQC…SVNE), 525 to 557 (TTAT…GLSP), 558 to 592 (NQIT…GTRP), 593 to 627 (DVVA…QIKP), and 628 to 665 (NWVT…GYKP).

The protein belongs to the PPR family. P subfamily.

It is found in the plastid. Its subcellular location is the chloroplast. This Arabidopsis thaliana (Mouse-ear cress) protein is Pentatricopeptide repeat-containing protein At5g02830, chloroplastic.